Reading from the N-terminus, the 304-residue chain is Non-specific ribonucleoside hydrolase RihC (304 aa).

The active site involves His233.

Belongs to the IUNH family. RihC subfamily.

In terms of biological role, hydrolyzes both purine and pyrimidine ribonucleosides with a broad-substrate specificity. This chain is Non-specific ribonucleoside hydrolase RihC, found in Escherichia coli (strain 55989 / EAEC).